Consider the following 537-residue polypeptide: Putative cysteine ligase BshC (537 aa).

Residues 422–450 (IEKVEGMIEQQRRLNQDLLDEVAGNQNNI) adopt a coiled-coil conformation.

This sequence belongs to the BshC family.

Its function is as follows. Involved in bacillithiol (BSH) biosynthesis. May catalyze the last step of the pathway, the addition of cysteine to glucosamine malate (GlcN-Mal) to generate BSH. The polypeptide is Putative cysteine ligase BshC (Staphylococcus aureus (strain bovine RF122 / ET3-1)).